The following is a 134-amino-acid chain: Small ribosomal subunit protein uS9 (134 aa).

A disordered region spans residues 109 to 134 (DARRTEPHKPSKSTKGPRAKRQKSYR). Residues 118 to 134 (PSKSTKGPRAKRQKSYR) show a composition bias toward basic residues.

This sequence belongs to the universal ribosomal protein uS9 family.

The protein is Small ribosomal subunit protein uS9 of Methanococcus aeolicus (strain ATCC BAA-1280 / DSM 17508 / OCM 812 / Nankai-3).